We begin with the raw amino-acid sequence, 66 residues long: Large ribosomal subunit protein bL35 (66 aa).

Over residues 24–43 (HKKAGKRHNLSKKSKARKRR) the composition is skewed to basic residues. The interval 24–44 (HKKAGKRHNLSKKSKARKRRL) is disordered.

This sequence belongs to the bacterial ribosomal protein bL35 family.

The chain is Large ribosomal subunit protein bL35 from Dictyoglomus thermophilum (strain ATCC 35947 / DSM 3960 / H-6-12).